The primary structure comprises 270 residues: tRNA (guanine-N(1)-)-methyltransferase (270 aa).

S-adenosyl-L-methionine contacts are provided by residues Gly113 and 133 to 138; that span reads IGDYVL. Residues 251-270 form a disordered region; it reads APTEGTGLIHHRDVEGPGEG. The span at 260-270 shows a compositional bias: basic and acidic residues; it reads HHRDVEGPGEG.

It belongs to the RNA methyltransferase TrmD family. As to quaternary structure, homodimer.

It is found in the cytoplasm. The enzyme catalyses guanosine(37) in tRNA + S-adenosyl-L-methionine = N(1)-methylguanosine(37) in tRNA + S-adenosyl-L-homocysteine + H(+). Specifically methylates guanosine-37 in various tRNAs. The chain is tRNA (guanine-N(1)-)-methyltransferase from Frankia casuarinae (strain DSM 45818 / CECT 9043 / HFP020203 / CcI3).